Here is a 355-residue protein sequence, read N- to C-terminus: Protein RecA (355 aa).

72 to 79 is an ATP binding site; the sequence is GPESSGKT.

Belongs to the RecA family.

The protein resides in the cytoplasm. Can catalyze the hydrolysis of ATP in the presence of single-stranded DNA, the ATP-dependent uptake of single-stranded DNA by duplex DNA, and the ATP-dependent hybridization of homologous single-stranded DNAs. It interacts with LexA causing its activation and leading to its autocatalytic cleavage. This Thermosynechococcus vestitus (strain NIES-2133 / IAM M-273 / BP-1) protein is Protein RecA.